We begin with the raw amino-acid sequence, 202 residues long: Protein Nef (202 aa).

Residue G2 is the site of N-myristoyl glycine; by host attachment. S6 is subject to Phosphoserine; by host. The acidic; interacts with host PACS1 and PACS2; stabilizes the interaction of NEF/MHC-I with host AP1M1; necessary for MHC-I internalization stretch occupies residues 62-65 (EEEE). Residues 69-78 (PVTPQVPLRP) are SH3-binding; interaction with Src family tyrosine kinases. The short motif at 72 to 75 (PQVP) is the PxxP; stabilizes the interaction of NEF/MHC-I with host AP1M1; necessary for MHC-I internalization element. A mediates dimerization, Nef-PTE1 interaction region spans residues 108–124 (DILDLWIYHTQGYFPDW). A binding to ATP6V1H region spans residues 148–180 (VEPDKVEEANKGENTRLLHPVSLHGMDDPEREV). The short motif at 164–165 (LL) is the Dileucine internalization motif; necessary for CD4 internalization element. Residues 174–175 (DD) carry the Diacidic; necessary for CD4 internalization motif.

It belongs to the lentivirus primate group Nef protein family. Monomer; cytosolic form. Homodimer; membrane bound form. Interacts with Nef associated p21-activated kinase (PAK2); this interaction activates PAK2. Associates with the Nef-MHC-I-AP1 complex; this complex is required for MHC-I internalization. Interacts (via C-terminus) with host PI3-kinase. Interacts with host PACS1; this interaction seems to be weak. Interacts with host PACS2. Interacts with host LCK and MAPK3; these interactions inhibit the kinase activity of the latter. Interacts with host ATP6V1H; this interaction may play a role in CD4 endocytosis. Associates with the CD4-Nef-AP2 complex; this complex is required for CD4 internalization. Interacts with host AP2 subunit alpha and AP2 subunit sigma2. Interacts with TCR-zeta chain; this interaction up-regulates the Fas ligand (FasL) surface expression. Interacts with host HCK, LYN, and SRC; these interactions activate the Src family kinases. Interacts with MAP3K5; this interaction inhibits the Fas and TNFR-mediated death signals. Interacts with beta-COP and PTE1. Interacts with human RACK1; this increases Nef phosphorylation by PKC. Interacts with TP53; this interaction decreases the half-life of TP53, protecting the infected cell against p53-mediated apoptosis. Post-translationally, the virion-associated Nef proteins are cleaved by the viral protease to release the soluble C-terminal core protein. Nef is probably cleaved concomitantly with viral structural proteins on maturation of virus particles. Myristoylated. In terms of processing, phosphorylated on serine residues, probably by host PKCdelta and theta.

It localises to the host cell membrane. The protein localises to the virion. The protein resides in the secreted. It is found in the host Golgi apparatus membrane. Its function is as follows. Factor of infectivity and pathogenicity, required for optimal virus replication. Alters numerous pathways of T-lymphocyte function and down-regulates immunity surface molecules in order to evade host defense and increase viral infectivity. Alters the functionality of other immunity cells, like dendritic cells, monocytes/macrophages and NK cells. In infected CD4(+) T-lymphocytes, down-regulates the surface MHC-I, mature MHC-II, CD4, CD28, CCR5 and CXCR4 molecules. Mediates internalization and degradation of host CD4 through the interaction of with the cytoplasmic tail of CD4, the recruitment of AP-2 (clathrin adapter protein complex 2), internalization through clathrin coated pits, and subsequent transport to endosomes and lysosomes for degradation. Diverts host MHC-I molecules to the trans-Golgi network-associated endosomal compartments by an endocytic pathway to finally target them for degradation. MHC-I down-regulation may involve AP-1 (clathrin adapter protein complex 1) or possibly Src family kinase-ZAP70/Syk-PI3K cascade recruited by PACS2. In consequence infected cells are masked for immune recognition by cytotoxic T-lymphocytes. Decreasing the number of immune receptors also prevents reinfection by more HIV particles (superinfection). Down-regulates host SERINC3 and SERINC5 thereby excluding these proteins from the viral particles. Virion infectivity is drastically higher when SERINC3 or SERINC5 are excluded from the viral envelope, because these host antiviral proteins impair the membrane fusion event necessary for subsequent virion penetration. In terms of biological role, bypasses host T-cell signaling by inducing a transcriptional program nearly identical to that of anti-CD3 cell activation. Interaction with TCR-zeta chain up-regulates the Fas ligand (FasL). Increasing surface FasL molecules and decreasing surface MHC-I molecules on infected CD4(+) cells send attacking cytotoxic CD8+ T-lymphocytes into apoptosis. Functionally, plays a role in optimizing the host cell environment for viral replication without causing cell death by apoptosis. Protects the infected cells from apoptosis in order to keep them alive until the next virus generation is ready to strike. Inhibits the Fas and TNFR-mediated death signals by blocking MAP3K5/ASK1. Decreases the half-life of TP53, protecting the infected cell against p53-mediated apoptosis. Inhibits the apoptotic signals regulated by the Bcl-2 family proteins through the formation of a Nef/PI3-kinase/PAK2 complex that leads to activation of PAK2 and induces phosphorylation of host BAD. Its function is as follows. Extracellular Nef protein targets CD4(+) T-lymphocytes for apoptosis by interacting with CXCR4 surface receptors. This Human immunodeficiency virus type 1 group M subtype B (isolate Lai) (HIV-1) protein is Protein Nef.